The following is a 189-amino-acid chain: MAKIPYAILEKGSLLLASPDTDQGVFARSVILLCEHSLNGSFGLILNKTLGLEISDDIFTFDKVSNNNIRFCMGGPLQANQMMLLHSCSEISEQTLEICPSVYLGGDLSFLQEIAASESGPTINLCFGYSGWQAGQLEKEFLEGNWFLAPASYEYVFSDNPDNLWSRILKDLGGKYASLSTVPENLLLN.

Belongs to the UPF0301 (AlgH) family.

This is UPF0301 protein CCA_00630 from Chlamydia caviae (strain ATCC VR-813 / DSM 19441 / 03DC25 / GPIC) (Chlamydophila caviae).